The following is a 143-amino-acid chain: Cytochrome c-type biogenesis protein CcmE (143 aa).

Topologically, residues 1–8 (MTPVRRRK) are cytoplasmic. A helical; Signal-anchor for type II membrane protein transmembrane segment spans residues 9 to 29 (LFILLFALSVLSAAAALVLYA). The Periplasmic portion of the chain corresponds to 30–143 (LRQNISLFYT…KSALADKVKQ (114 aa)). Residues His-124 and Tyr-128 each coordinate heme.

The protein belongs to the CcmE/CycJ family.

It localises to the cell inner membrane. Heme chaperone required for the biogenesis of c-type cytochromes. Transiently binds heme delivered by CcmC and transfers the heme to apo-cytochromes in a process facilitated by CcmF and CcmH. The sequence is that of Cytochrome c-type biogenesis protein CcmE from Legionella pneumophila (strain Lens).